We begin with the raw amino-acid sequence, 313 residues long: LOB domain-containing protein 36 (313 aa).

Positions 6 to 107 (SPCAACKFLR…HDLENAKKEL (102 aa)) constitute an LOB domain. The tract at residues 245-313 (GNFVDSPSTN…SEEGRRNVIG (69 aa)) is disordered. The span at 249 to 260 (DSPSTNNNYHTD) shows a compositional bias: polar residues. The span at 280–302 (PSQSSQPLPLQTQETQTQTQPNS) shows a compositional bias: low complexity.

Belongs to the LOB domain-containing protein family. As to expression, expressed in trichomes, at the base of many lateral organs, including branching points of the inflorescence and floral organs and in the distal part of the pistil at stages when style and stigma start to develop. Also detected in pedicels and at the base of petals and sepals.

In terms of biological role, controls the proximal-distal patterning in petals and the adaxial-abaxial determination of leaves. Involved in the repression of the homeobox gene BP. This chain is LOB domain-containing protein 36 (LBD36), found in Arabidopsis thaliana (Mouse-ear cress).